The chain runs to 217 residues: MKIALYSILLITVCYLSSTDAYLFDPKAVDALLREIRARLQATGKEPHARKIEQETEEIKKEELMQAEDVEGSGSGEEIEGSGEVISTITGVPIMDNEEKKDLKPENFPRPEPIFDKYGNLKSKDKLEALTYSNFKKQAPATLQDHYNLNPTGTLQMLQGLDIHGGSGGYHRALSGGYLPPSTYDPYNVNWHSYGDEGVKMKDKAISVFRRVIAPGR.

A signal peptide spans Met1 to Ala21.

The protein resides in the nucleus. It is found in the secreted. Probably acts downstream of the Wnt signaling pathway. This Caenorhabditis elegans protein is Protein dao-4.